We begin with the raw amino-acid sequence, 165 residues long: MAPKKAKKRIEGANSNVFSMFEQAQIQEFKEAFTIMDQNRDGFIDKADLRDTFAALGRLNVKNEEIDEMIKEAPGPINFTVFLTMFGEKLKGADPEETILNAFKVFDPEGKGLKSAYIKEMLMTQEGRFSQEEIDQMFAAFPPDVSGNLDYKNLVHVITHGEEKD.

Ala2 is subject to N,N,N-trimethylalanine. EF-hand domains follow at residues 24–59, 94–128, and 129–164; these read AQIQEFKEAFTIMDQNRDGFIDKADLRDTFAALGRL, DPEETILNAFKVFDPEGKGLKSAYIKEMLMTQEGR, and FSQEEIDQMFAAFPPDVSGNLDYKNLVHVITHGEEK. Asp37, Asn39, Asp41, and Asp48 together coordinate Ca(2+).

Myosin is a hexamer of 2 heavy chains and 4 light chains. The N-terminus is blocked. N,N,N-trimethylalanine, found in other myosin light chains would not have been detected in the N-terminal tryptic peptide in PubMed:7319048 because it would remain trimethylated and ninhydrin negative after hydrolysis.

The polypeptide is Myosin regulatory light chain 2A, cardiac muscle isoform (Gallus gallus (Chicken)).